Consider the following 129-residue polypeptide: Large ribosomal subunit protein uL22 (129 aa).

Belongs to the universal ribosomal protein uL22 family. Part of the 50S ribosomal subunit.

In terms of biological role, this protein binds specifically to 23S rRNA; its binding is stimulated by other ribosomal proteins, e.g. L4, L17, and L20. It is important during the early stages of 50S assembly. It makes multiple contacts with different domains of the 23S rRNA in the assembled 50S subunit and ribosome. Its function is as follows. The globular domain of the protein is located near the polypeptide exit tunnel on the outside of the subunit, while an extended beta-hairpin is found that lines the wall of the exit tunnel in the center of the 70S ribosome. The chain is Large ribosomal subunit protein uL22 from Onion yellows phytoplasma (strain OY-M).